Here is a 118-residue protein sequence, read N- to C-terminus: Cell division protein FtsB (118 aa).

Residues 1 to 3 (MRL) are Cytoplasmic-facing. The helical transmembrane segment at 4-21 (LFLVLLVLLGLIQYPLWL) threads the bilayer. Topologically, residues 22-118 (GKGGWFKVWD…PRPPATPPRR (97 aa)) are periplasmic. The stretch at 28-62 (KVWDLQRQVAEQRETNDGLRARNTALEAEVRDLAT) forms a coiled coil. A disordered region spans residues 88 to 118 (LPPGTPLPSDNSTPQASALSKPRPPATPPRR). Residues 95–105 (PSDNSTPQASA) are compositionally biased toward polar residues. Residues 109–118 (PRPPATPPRR) are compositionally biased toward pro residues.

It belongs to the FtsB family. As to quaternary structure, part of a complex composed of FtsB, FtsL and FtsQ.

Its subcellular location is the cell inner membrane. Its function is as follows. Essential cell division protein. May link together the upstream cell division proteins, which are predominantly cytoplasmic, with the downstream cell division proteins, which are predominantly periplasmic. The protein is Cell division protein FtsB of Bordetella bronchiseptica (strain ATCC BAA-588 / NCTC 13252 / RB50) (Alcaligenes bronchisepticus).